A 115-amino-acid chain; its full sequence is Large ribosomal subunit protein bL19 (115 aa).

The protein belongs to the bacterial ribosomal protein bL19 family.

This protein is located at the 30S-50S ribosomal subunit interface and may play a role in the structure and function of the aminoacyl-tRNA binding site. This Lactobacillus delbrueckii subsp. bulgaricus (strain ATCC BAA-365 / Lb-18) protein is Large ribosomal subunit protein bL19.